The primary structure comprises 1214 residues: Filamin-A-interacting protein 1 (1214 aa).

The segment covering 1–15 has biased composition (polar residues); that stretch reads MRSRNQGGESSSNGH. The disordered stretch occupies residues 1–73; that stretch reads MRSRNQGGES…ESEKKTKKPL (73 aa). Basic and acidic residues-rich tracts occupy residues 32 to 47 and 61 to 73; these read PSED…KGED and PSGE…KKPL. Residue Ser138 is modified to Phosphoserine. Coiled-coil stretches lie at residues 192–581 and 624–778; these read DYMN…KLRS and PEDN…ELEL. Disordered stretches follow at residues 875 to 898 and 949 to 976; these read KREN…GHPG and KPRI…GPER. Ser979 carries the phosphoserine modification. Residues 1104–1192 are disordered; it reads VSTGTVLRSP…TKFQPRAETQ (89 aa). Positions 1126 to 1140 are enriched in low complexity; it reads VTSTITITPVTTSST. Residues 1141 to 1157 show a composition bias toward polar residues; it reads RGTQSVSGQDGSSQRPT. The span at 1169-1180 shows a compositional bias: low complexity; that stretch reads AGKPVVAAPGAG.

Belongs to the FILIP1 family. In terms of assembly, interacts with FLNA. Interacts with RHOD (in GTP-bound form).

The protein localises to the cytoplasm. Its subcellular location is the cytoskeleton. Functionally, by acting through a filamin-A/F-actin axis, it controls the start of neocortical cell migration from the ventricular zone. May be able to induce the degradation of filamin-A. The polypeptide is Filamin-A-interacting protein 1 (Filip1) (Mus musculus (Mouse)).